The chain runs to 471 residues: Ubiquitin carboxyl-terminal hydrolase calypso (471 aa).

Positions 45–276 (GWLELESDPG…IRFNLMAVVP (232 aa)) constitute a UCH catalytic domain. The Nucleophile role is filled by cysteine 131. Residue histidine 213 is the Proton donor of the active site. The interval 307–326 (DEQGESGNGDSQRPDTPTTL) is disordered. Polar residues predominate over residues 314–326 (NGDSQRPDTPTTL). One can recognise a ULD domain in the interval 375-403 (NYDKFICTFLSMLAHQGVLGELVSQHLLP). Residues 405 to 471 (KKVSGQGAAN…KGRNKCRKRK (67 aa)) are positively charged C-terminal tail required for binding nucleosomes. Positions 412 to 471 (AANRISKQSNTASAGGSTTGASASTPKTQQQQAAAAKNGKSPSKTPGRRRKGRNKCRKRK) are disordered. Over residues 422–447 (TASAGGSTTGASASTPKTQQQQAAAA) the composition is skewed to low complexity. Basic residues predominate over residues 457–471 (PGRRRKGRNKCRKRK).

It belongs to the peptidase C12 family. BAP1 subfamily. As to quaternary structure, catalytic component of the polycomb repressive deubiquitinase (PR-DUB) complex, at least composed of caly/calypso, Asx and sba (MBD5/6 homolog). The PR-DUB complex associates with nucleosomes to mediate deubiquitination of histone H2AK118ub1 substrates; the association requires the positively charged C-terminal tail of caly, probably due to direct binding of DNA. Interacts (via ULD domain) with Asx (via DEUBAD domain); the interaction produces a stable heterodimer with a composite binding site for ubiquitin. Homodimerizes (via coiled-coil hinge-region between the UCH and ULD domains) to mediate assembly of 2 copies of the caly-Asx heterodimer into a bisymmetric tetramer; dimerization enhances PR-DUB association with nucleosomes.

The protein localises to the nucleus. It catalyses the reaction Thiol-dependent hydrolysis of ester, thioester, amide, peptide and isopeptide bonds formed by the C-terminal Gly of ubiquitin (a 76-residue protein attached to proteins as an intracellular targeting signal).. Functionally, catalytic component of the polycomb repressive deubiquitinase (PR-DUB) complex, a complex that specifically mediates deubiquitination of histone H2A monoubiquitinated at 'Lys-119' (H2AK118ub1). Mediates bisymmetric organization of the PR-DUB complex and is involved in association with nucleosomes to mediate deubiquitination. Does not deubiquitinate monoubiquitinated histone H2B. Required to maintain the transcriptionally repressive state of homeotic genes throughout development. The PR-DUB complex has weak or no activity toward 'Lys-48'- and 'Lys-63'-linked polyubiquitin chains. Polycomb group (PcG) protein. This is Ubiquitin carboxyl-terminal hydrolase calypso from Drosophila sechellia (Fruit fly).